Reading from the N-terminus, the 79-residue chain is D-alanyl carrier protein (79 aa).

Residues 1 to 77 (MDTKQAVLDI…KIIAKVESLR (77 aa)) enclose the Carrier domain. An O-(pantetheine 4'-phosphoryl)serine modification is found at Ser35.

The protein belongs to the DltC family. In terms of processing, 4'-phosphopantetheine is transferred from CoA to a specific serine of apo-DCP.

Its subcellular location is the cytoplasm. It functions in the pathway cell wall biogenesis; lipoteichoic acid biosynthesis. Its function is as follows. Carrier protein involved in the D-alanylation of lipoteichoic acid (LTA). The loading of thioester-linked D-alanine onto DltC is catalyzed by D-alanine--D-alanyl carrier protein ligase DltA. The DltC-carried D-alanyl group is further transferred to cell membrane phosphatidylglycerol (PG) by forming an ester bond, probably catalyzed by DltD. D-alanylation of LTA plays an important role in modulating the properties of the cell wall in Gram-positive bacteria, influencing the net charge of the cell wall. This chain is D-alanyl carrier protein, found in Lactobacillus gasseri (strain ATCC 33323 / DSM 20243 / BCRC 14619 / CIP 102991 / JCM 1131 / KCTC 3163 / NCIMB 11718 / NCTC 13722 / AM63).